We begin with the raw amino-acid sequence, 622 residues long: Dehydrogenase mpl7 (622 aa).

FAD is bound by residues 23 to 24, 44 to 45, and 102 to 105; these read TA, EA, and NFMS. The active-site Proton acceptor is the His554. Residues Ala582 and 593–594 contribute to the FAD site; that span reads IM.

Belongs to the GMC oxidoreductase family. In terms of assembly, homodimer. FAD serves as cofactor.

It participates in mycotoxin biosynthesis. Functionally, dehydrogenase; part of the gene cluster that mediates the biosynthesis of the mycotoxin citrinin, a hepato-nephrotoxic compound to humans due to inhibition of respiration complex III. The pathway begins with the synthesis of a keto-aldehyde intermediate by the citrinin PKS (pksCT) from successive condensations of 4 malonyl-CoA units, presumably with a simple acetyl-CoA starter unit. Release of the keto-aldehyde intermediate is consistent with the presence of the C-terminal reductive release domain. Mp11 collaborates with pksCT by catalyzing the hydrolysis of ACP-bound acyl intermediates to free the ACP from stalled intermediates. Mpl2 then catalyzes the oxidation of the C-12 methyl of the ketone intermediate to an alcohol intermediate which is further oxidized by the oxidoreductase mpl7 to produce a bisaldehyde intermediate. The fourth catalytic step is catalyzed by the mpl4 aldehyde dehydrogenase. The final transformation is the reduction of C-3 by mpl6 to provide the chemically stable citrinin nucleus. In Monascus purpureus (Red mold), this protein is Dehydrogenase mpl7.